A 769-amino-acid polypeptide reads, in one-letter code: Endonuclease MutS2 (769 aa).

335–342 (GGNAGGKT) is an ATP binding site. The Smr domain occupies 694–769 (IDLRGKRADV…GDGMTEVELV (76 aa)).

The protein belongs to the DNA mismatch repair MutS family. MutS2 subfamily. As to quaternary structure, homodimer. Binds to stalled ribosomes, contacting rRNA.

In terms of biological role, endonuclease that is involved in the suppression of homologous recombination and thus may have a key role in the control of bacterial genetic diversity. Acts as a ribosome collision sensor, splitting the ribosome into its 2 subunits. Detects stalled/collided 70S ribosomes which it binds and splits by an ATP-hydrolysis driven conformational change. Acts upstream of the ribosome quality control system (RQC), a ribosome-associated complex that mediates the extraction of incompletely synthesized nascent chains from stalled ribosomes and their subsequent degradation. Probably generates substrates for RQC. The chain is Endonuclease MutS2 from Maridesulfovibrio salexigens (strain ATCC 14822 / DSM 2638 / NCIMB 8403 / VKM B-1763) (Desulfovibrio salexigens).